A 379-amino-acid polypeptide reads, in one-letter code: Flagellar P-ring protein (379 aa).

The signal sequence occupies residues 1–32 (MTAPAGFLPRVGRLIAVALTAVFLLAPTGAEA).

The protein belongs to the FlgI family. The basal body constitutes a major portion of the flagellar organelle and consists of four rings (L,P,S, and M) mounted on a central rod.

The protein resides in the periplasm. It is found in the bacterial flagellum basal body. Its function is as follows. Assembles around the rod to form the L-ring and probably protects the motor/basal body from shearing forces during rotation. This Rhodospirillum rubrum (strain ATCC 11170 / ATH 1.1.1 / DSM 467 / LMG 4362 / NCIMB 8255 / S1) protein is Flagellar P-ring protein.